The primary structure comprises 101 residues: ATP-dependent Clp protease adapter protein ClpS (101 aa).

Belongs to the ClpS family. As to quaternary structure, binds to the N-terminal domain of the chaperone ClpA.

Its function is as follows. Involved in the modulation of the specificity of the ClpAP-mediated ATP-dependent protein degradation. In Corynebacterium efficiens (strain DSM 44549 / YS-314 / AJ 12310 / JCM 11189 / NBRC 100395), this protein is ATP-dependent Clp protease adapter protein ClpS.